A 163-amino-acid polypeptide reads, in one-letter code: MGVPRAREGRGAGSQSPPRGRCLHPFRWGSQDRGRGEGLALSPLLPGVPPPPAMGVPRDRGGRGAGSQSTPRGGCLLPPRLGSQQPAGEEGLVLSPRLAGDASPCCDGSPKSQGVKRGWLSVPTSRGVPPPPAIGVLIARGGRGAGSQSLPRGWSFTPLRWGS.

Residues 1–10 show a composition bias toward basic and acidic residues; sequence MGVPRAREGR. Residues 1 to 163 form a disordered region; the sequence is MGVPRAREGR…WSFTPLRWGS (163 aa).

This is an uncharacterized protein from Homo sapiens (Human).